A 176-amino-acid polypeptide reads, in one-letter code: RNA 2',3'-cyclic phosphodiesterase (176 aa).

The active-site Proton donor is histidine 39. 2 consecutive short sequence motifs (HXTX) follow at residues 39-42 (HITL) and 122-125 (HLTV). The active-site Proton acceptor is histidine 122.

The protein belongs to the 2H phosphoesterase superfamily. ThpR family.

The catalysed reaction is a 3'-end 2',3'-cyclophospho-ribonucleotide-RNA + H2O = a 3'-end 2'-phospho-ribonucleotide-RNA + H(+). Functionally, hydrolyzes RNA 2',3'-cyclic phosphodiester to an RNA 2'-phosphomonoester. The chain is RNA 2',3'-cyclic phosphodiesterase from Archaeoglobus fulgidus (strain ATCC 49558 / DSM 4304 / JCM 9628 / NBRC 100126 / VC-16).